The primary structure comprises 427 residues: U1 small nuclear ribonucleoprotein 70 kDa (427 aa).

2 disordered regions span residues 82–102 and 215–427; these read EPGD…SQKR and RGRT…EYVR. Positions 93–102 are enriched in basic and acidic residues; the sequence is PEVELPSQKR. Positions 138–216 constitute an RRM domain; it reads KTLFVSRLNY…RRVLVDVERG (79 aa). Positions 227–241 are enriched in gly residues; sequence LGGGLGTSRVGGGEE. 2 stretches are compositionally biased toward basic and acidic residues: residues 257–402 and 409–427; these read EPSR…RYDK and RYER…EYVR. Serine 282 is modified (phosphoserine).

Component of the spliceosome. Interacts with CYP63, U2AF35A, U2AF35B, SRZ21, RSZ22, SR34, SR45, SR45A and SCL33. Post-translationally, phosphorylated. The association and dissociation with SR45 is not affected by the phosphorylation status. Ubiquitous.

The protein resides in the nucleus speckle. Its subcellular location is the nucleus. It localises to the nucleoplasm. Mediates the splicing of pre-mRNA by binding to the loop I region of U1-snRNA. This chain is U1 small nuclear ribonucleoprotein 70 kDa (RNU1), found in Arabidopsis thaliana (Mouse-ear cress).